The sequence spans 202 residues: MKLASKEAGMIDLFMILGAYLLGGMSTGYYLVKLWRQEDVRNQGSGATGATNAGRVLGKKGFLLTLMGDALKGALAPALSMHFNLSLTTLILCLIAGVAGHIWPLQLGLRGGKGVAPALGGILVVDPMLASAAAGVFLFVLALTRQFTLSGLAAILGAPILSLIMARPFEQSAGLAVLAIFILLAHRKNIREMLNKSSQRRR.

Helical transmembrane passes span 8–28, 85–105, 122–142, 146–166, and 173–190; these read AGMI…MSTG, LSLT…IWPL, ILVV…FVLA, QFTL…LIMA, and AGLA…RKNI.

Belongs to the PlsY family. Probably interacts with PlsX.

It is found in the cell membrane. It catalyses the reaction an acyl phosphate + sn-glycerol 3-phosphate = a 1-acyl-sn-glycero-3-phosphate + phosphate. It participates in lipid metabolism; phospholipid metabolism. Its function is as follows. Catalyzes the transfer of an acyl group from acyl-phosphate (acyl-PO(4)) to glycerol-3-phosphate (G3P) to form lysophosphatidic acid (LPA). This enzyme utilizes acyl-phosphate as fatty acyl donor, but not acyl-CoA or acyl-ACP. This chain is Glycerol-3-phosphate acyltransferase 1, found in Desulfitobacterium hafniense (strain Y51).